A 134-amino-acid chain; its full sequence is Small ribosomal subunit protein uS9 (134 aa).

Residues 114–134 (QKESKNFGGPGARAKYQKSYR) form a disordered region.

The protein belongs to the universal ribosomal protein uS9 family.

The chain is Small ribosomal subunit protein uS9 from Methanosarcina acetivorans (strain ATCC 35395 / DSM 2834 / JCM 12185 / C2A).